The sequence spans 70 residues: Small ribosomal subunit protein bS21 (70 aa).

Belongs to the bacterial ribosomal protein bS21 family.

This is Small ribosomal subunit protein bS21 from Helicobacter hepaticus (strain ATCC 51449 / 3B1).